Reading from the N-terminus, the 425-residue chain is Glutamyl-tRNA reductase (425 aa).

Residues Thr-49–Arg-52, Ser-107, Glu-112–Gln-114, and Gln-118 each bind substrate. Catalysis depends on Cys-50, which acts as the Nucleophile. Gly-187–Ile-192 lines the NADP(+) pocket.

The protein belongs to the glutamyl-tRNA reductase family. Homodimer.

The catalysed reaction is (S)-4-amino-5-oxopentanoate + tRNA(Glu) + NADP(+) = L-glutamyl-tRNA(Glu) + NADPH + H(+). Its pathway is porphyrin-containing compound metabolism; protoporphyrin-IX biosynthesis; 5-aminolevulinate from L-glutamyl-tRNA(Glu): step 1/2. Functionally, catalyzes the NADPH-dependent reduction of glutamyl-tRNA(Glu) to glutamate 1-semialdehyde (GSA). The polypeptide is Glutamyl-tRNA reductase (Pseudomonas savastanoi pv. phaseolicola (strain 1448A / Race 6) (Pseudomonas syringae pv. phaseolicola (strain 1448A / Race 6))).